A 372-amino-acid chain; its full sequence is Cyclin-dependent kinase 9 (372 aa).

In terms of domain architecture, Protein kinase spans Tyr19–Phe315. Residue Ile25 to Val33 participates in ATP binding. Position 35 is a phosphoserine (Lys35). The residue at position 44 (Lys44) is an N6-acetyllysine; by EP300/CBP, PCAF/KAT2B and GCN5/KAT2A. Lys48 contacts ATP. An N6-acetyllysine; by PCAF/KAT2B and GCN5/KAT2A modification is found at Lys48. A Phosphothreonine modification is found at Asn54. Asp104–Cys106 contributes to the ATP binding site. The Proton acceptor role is filled by Asp149. Positions Ala166–Thr191 are T-loop. Residue Asp167 coordinates ATP. Position 175 is a phosphoserine (Ser175). The residue at position 186 (Thr186) is a Phosphothreonine; by CaMK1D. The interval Arg343 to Phe372 is disordered. Ser347 is modified (phosphoserine; by CDK9 and PKA). Positions Ser347–Thr366 are enriched in polar residues. Thr350 is subject to Phosphothreonine; by CDK9. The residue at position 353 (Ser353) is a Phosphoserine; by CDK9. The residue at position 354 (Thr354) is a Phosphothreonine; by CDK9. Ser357 is modified (phosphoserine; by CDK9). Phosphothreonine; by CDK9 occurs at positions 362 and 363.

It belongs to the protein kinase superfamily. CMGC Ser/Thr protein kinase family. CDC2/CDKX subfamily. Component of the super elongation complex (SEC), at least composed of EAF1, EAF2, CDK9, MLLT3/AF9, AFF (AFF1 or AFF4), the P-TEFb complex and ELL (ELL, ELL2 or ELL3). Associates with CCNT1/cyclin-T1, CCNT2/cyclin-T2 (isoform A and isoform B) or CCNK/cyclin-K to form active P-TEFb. P-TEFb forms a complex with AFF4/AF5Q31 and is part of the super elongation complex (SEC). Component of a complex which is composed of at least 5 members: HTATSF1/Tat-SF1, P-TEFb complex, RNA pol II, SUPT5H and NCL/nucleolin. Associates with UBR5 and forms a transcription regulatory complex composed of CDK9, RNAP II, UBR5 and TFIIS/TCEA1 that can stimulate target gene transcription (e.g. gamma fibrinogen/FGG) by recruiting their promoters. Component of the 7SK snRNP inactive complex which is composed of at least 8 members: P-TEFb (composed of CDK9 and CCNT1/cyclin-T1), HEXIM1, HEXIM2, LARP7, BCDIN3, SART3 proteins and 7SK and U6 snRNAs. This inactive 7SK snRNP complex can also interact with NCOR1 and HDAC3, probably to regulate CDK9 acetylation. Release of P-TEFb from P-TEFb/7SK snRNP complex requires both PP2B to transduce calcium Ca(2+) signaling in response to stimuli (e.g. UV or hexamethylene bisacetamide (HMBA)) and PPP1CA to dephosphorylate Thr-186. This released P-TEFb remains inactive in the pre-initiation complex with BRD4 until new Thr-186 phosphorylation occurs after the synthesis of a short RNA. Interacts with BRD4; to target chromatin binding. Interacts with JMJD6. Interacts with activated nuclear STAT3 and RELA/p65. Binds to AR and MYOD1. Forms a complex composed of CDK9, CCNT1/cyclin-T1, EP300 and GATA4 that stimulates hypertrophy in cardiomyocytes. The large PER complex involved in the repression of transcriptional termination is composed of at least PER2, CDK9, DDX5, DHX9, NCBP1 and POLR2A. Interacts with HSF1. Interacts with TBX21. Isoform 3: binds to KU70/XRCC6. Interacts with WDR43. Interacts with ZMYND8; the association appears to occur between homodimeric ZMYND8 and the activated form of the P-TEFb complex. As to quaternary structure, (Microbial infection) Interacts with the acidic/proline-rich region of HIV-1 and HIV-2 Tat via T-loop region and is thus required for HIV to hijack host transcription machinery during its replication through cooperative binding to viral TAR RNA. In terms of assembly, (Microbial infection) Interacts with human herpes virus 1 (HHV-1) protein ICP22; this interaction blocks the recruitment of positive transcription elongation factor b (P-TEFb) to the viral promoter. Post-translationally, autophosphorylation at Thr-186, Ser-347, Thr-350, Ser-353, Thr-354 and Ser-357 triggers kinase activity by promoting cyclin and substrate binding (e.g. HIV TAT) upon conformational changes. Thr-186 phosphorylation requires the calcium Ca(2+) signaling pathway, including CaMK1D and calmodulin. This inhibition is relieved by Thr-29 dephosphorylation. However, phosphorylation at Thr-29 is inhibitory within the HIV transcription initiation complex. Phosphorylation at Ser-175 inhibits kinase activity. Can be phosphorylated on either Thr-362 or Thr-363 but not on both simultaneously. Dephosphorylation of Thr-186 by PPM1A and PPM1B blocks CDK9 activity and may lead to CDK9 proteasomal degradation. However, PPP1CA-mediated Thr-186 dephosphorylation is required to release P-TEFb from its inactive P-TEFb/7SK snRNP complex. Dephosphorylated at Ser-347 by the PNUTS-PP1 complex during RNA polymerase II transcription pause-release. Dephosphorylation of C-terminus Thr and Ser residues by protein phosphatase-1 (PP1) triggers CDK9 activity, contributing to the activation of HIV-1 transcription. In terms of processing, N6-acetylation of Lys-44 promotes kinase activity, whereas acetylation of both Lys-44 and Lys-48 mediated by PCAF/KAT2B and GCN5/KAT2A reduces kinase activity. The acetylated form associates with PML bodies in the nuclear matrix and with the transcriptionally silent HIV-1 genome; deacetylated upon transcription stimulation. Deacetylated by SIRT7, promoting the kinase activity and subsequent 'Ser-2' phosphorylation of the C-terminal domain (CTD) of RNA polymerase II. Post-translationally, polyubiquitinated and thus activated by UBR5. This ubiquitination is promoted by TFIIS/TCEA1 and favors 'Ser-2' phosphorylation of RPB1/POLR2A CTD. As to expression, ubiquitous.

The protein resides in the nucleus. Its subcellular location is the cytoplasm. It localises to the PML body. It catalyses the reaction L-seryl-[protein] + ATP = O-phospho-L-seryl-[protein] + ADP + H(+). The catalysed reaction is L-threonyl-[protein] + ATP = O-phospho-L-threonyl-[protein] + ADP + H(+). It carries out the reaction [DNA-directed RNA polymerase] + ATP = phospho-[DNA-directed RNA polymerase] + ADP + H(+). Inhibited by CDKI-71, CR8, GPC-286199, AG-024322, flavopiridol (alvocidib), RBG-286147, anilinopyrimidine 32, arylazopyrazole 31b, indirubin 3'-monoxime, meriolin 3,P276-00, olomoucine II, pyrazolotriazine, meriolin, variolin, thiazolyl-pyrimidine, thiazolyl-pyrimidine, indirubin-30-monoxime, ZK 304709, AG-012986, AT7519, R547, RGB-286638, imidazole pyrimidine, EXEL-3700, EXEL-8647, 5,6-dichloro-1-b-ribofur-anosyl-benzimidazole (DRB), P276-00, roscovitine (seliciclib, CYC202) and SNS-032 (BMS-387032). Activation by Thr-186 phosphorylation is calcium Ca(2+) signaling pathway-dependent; actively inactivated by dephosphorylation mediated by PPP1CA, PPM1A and PPM1B. Reversibly repressed by acetylation at Lys-44 and Lys-48. Protein kinase involved in the regulation of transcription. Member of the cyclin-dependent kinase pair (CDK9/cyclin-T) complex, also called positive transcription elongation factor b (P-TEFb), which facilitates the transition from abortive to productive elongation by phosphorylating the CTD (C-terminal domain) of the large subunit of RNA polymerase II (RNAP II) POLR2A, SUPT5H and RDBP. This complex is inactive when in the 7SK snRNP complex form. Phosphorylates EP300, MYOD1, RPB1/POLR2A and AR and the negative elongation factors DSIF and NELFE. Regulates cytokine inducible transcription networks by facilitating promoter recognition of target transcription factors (e.g. TNF-inducible RELA/p65 activation and IL-6-inducible STAT3 signaling). Promotes RNA synthesis in genetic programs for cell growth, differentiation and viral pathogenesis. P-TEFb is also involved in cotranscriptional histone modification, mRNA processing and mRNA export. Modulates a complex network of chromatin modifications including histone H2B monoubiquitination (H2Bub1), H3 lysine 4 trimethylation (H3K4me3) and H3K36me3; integrates phosphorylation during transcription with chromatin modifications to control co-transcriptional histone mRNA processing. The CDK9/cyclin-K complex has also a kinase activity towards CTD of RNAP II and can substitute for CDK9/cyclin-T P-TEFb in vitro. Replication stress response protein; the CDK9/cyclin-K complex is required for genome integrity maintenance, by promoting cell cycle recovery from replication arrest and limiting single-stranded DNA amount in response to replication stress, thus reducing the breakdown of stalled replication forks and avoiding DNA damage. In addition, probable function in DNA repair of isoform 2 via interaction with KU70/XRCC6. Promotes cardiac myocyte enlargement. RPB1/POLR2A phosphorylation on 'Ser-2' in CTD activates transcription. AR phosphorylation modulates AR transcription factor promoter selectivity and cell growth. DSIF and NELF phosphorylation promotes transcription by inhibiting their negative effect. The phosphorylation of MYOD1 enhances its transcriptional activity and thus promotes muscle differentiation. Catalyzes phosphorylation of KAT5, promoting KAT5 recruitment to chromatin and histone acetyltransferase activity. This Homo sapiens (Human) protein is Cyclin-dependent kinase 9.